The primary structure comprises 441 residues: tRNA-2-methylthio-N(6)-dimethylallyladenosine synthase (441 aa).

One can recognise an MTTase N-terminal domain in the interval 3–119 (KKVSIRTFGC…LPGLIRNAFQ (117 aa)). Residues Cys12, Cys48, Cys82, Cys155, Cys159, and Cys162 each coordinate [4Fe-4S] cluster. The region spanning 141–371 (RSGSISAFIP…IDLQSGISGE (231 aa)) is the Radical SAM core domain. The TRAM domain occupies 374–437 (GNDVGSVQEV…QATLIGRCQD (64 aa)).

Belongs to the methylthiotransferase family. MiaB subfamily. As to quaternary structure, monomer. Requires [4Fe-4S] cluster as cofactor.

The protein localises to the cytoplasm. The catalysed reaction is N(6)-dimethylallyladenosine(37) in tRNA + (sulfur carrier)-SH + AH2 + 2 S-adenosyl-L-methionine = 2-methylsulfanyl-N(6)-dimethylallyladenosine(37) in tRNA + (sulfur carrier)-H + 5'-deoxyadenosine + L-methionine + A + S-adenosyl-L-homocysteine + 2 H(+). Its function is as follows. Catalyzes the methylthiolation of N6-(dimethylallyl)adenosine (i(6)A), leading to the formation of 2-methylthio-N6-(dimethylallyl)adenosine (ms(2)i(6)A) at position 37 in tRNAs that read codons beginning with uridine. This is tRNA-2-methylthio-N(6)-dimethylallyladenosine synthase from Prosthecochloris aestuarii (strain DSM 271 / SK 413).